A 129-amino-acid polypeptide reads, in one-letter code: uncharacterized protein (129 aa).

This is an uncharacterized protein from Bacillus subtilis (strain 168).